We begin with the raw amino-acid sequence, 299 residues long: Phosphatidylinositol-3-phosphatase (299 aa).

Positions M1–A43 are cleaved as a signal peptide.

Monomer. SapM interacts with host RAB7 via its C-terminus. A metal cation serves as cofactor.

It localises to the secreted. Its subcellular location is the host cytoplasmic vesicle. The protein localises to the host phagosome. It carries out the reaction a phosphate monoester + H2O = an alcohol + phosphate. The catalysed reaction is a 1,2-diacyl-sn-glycero-3-phospho-(1D-myo-inositol-3-phosphate) + H2O = a 1,2-diacyl-sn-glycero-3-phospho-(1D-myo-inositol) + phosphate. With respect to regulation, phosphatase activity is inhibited in vitro by low concentrations of several heavy metals (zinc chloride, sodium molybdate, magnesium chloride, and copper sulfate) and moderately high concentrations (&gt;8 mM) of EDTA. Functionally, virulence factor that plays an important role in blocking phagosome-lysosome fusion and thus participates in the intracellular survival of the pathogen. Acts as a phosphatase that dephosphorylates phosphatidylinositol 3-phosphate (PI3P), a membrane trafficking regulatory lipid essential for phagosomal acquisition of lysosomal constituents. Therefore, SapM eliminates PI3P from the phagosomal membrane by catalyzing its hydrolysis, and thus contributes to inhibition of phagosome maturation. Also interferes with autophagy: SapM blocks autophagosome-lysosome fusion in macrophages by binding to the small GTPase RAB7, which prevents RAB7 from being involved in this process and thus negatively regulates autophagy flux. In vitro, displays phosphatase activity with broad specificity; can dephosphorylate a variety of phosphoester substrates, with the highest activity against phosphoenolpyruvate, glycerophosphate, GTP, NADPH, phosphotyrosine and trehalose-6-phosphate. In contrast, the enzyme exhibits poor activity against glucose-6-phosphate, phosphothreonine, and a number of nucleotides (NADP, ATP, AMP, and GMP). This chain is Phosphatidylinositol-3-phosphatase, found in Mycobacterium tuberculosis (strain ATCC 25618 / H37Rv).